A 276-amino-acid chain; its full sequence is Diaminopimelate epimerase (276 aa).

Substrate is bound by residues Asn11, Gln44, and Asn64. The active-site Proton donor is the Cys73. Residues 74–75 (IN), Asn159, Asn192, and 210–211 (ER) contribute to the substrate site. Cys219 serves as the catalytic Proton acceptor. Position 220–221 (220–221 (GS)) interacts with substrate.

Belongs to the diaminopimelate epimerase family. As to quaternary structure, homodimer.

It is found in the cytoplasm. It catalyses the reaction (2S,6S)-2,6-diaminopimelate = meso-2,6-diaminopimelate. It functions in the pathway amino-acid biosynthesis; L-lysine biosynthesis via DAP pathway; DL-2,6-diaminopimelate from LL-2,6-diaminopimelate: step 1/1. Its function is as follows. Catalyzes the stereoinversion of LL-2,6-diaminopimelate (L,L-DAP) to meso-diaminopimelate (meso-DAP), a precursor of L-lysine and an essential component of the bacterial peptidoglycan. This Wigglesworthia glossinidia brevipalpis protein is Diaminopimelate epimerase.